The following is an 818-amino-acid chain: Phenylalanine--tRNA ligase beta subunit (818 aa).

In terms of domain architecture, tRNA-binding spans A39 to T148. The 76-residue stretch at P423–S498 folds into the B5 domain. Mg(2+) is bound by residues D476, D482, E485, and E486. The 94-residue stretch at S724 to R817 folds into the FDX-ACB domain.

It belongs to the phenylalanyl-tRNA synthetase beta subunit family. Type 1 subfamily. In terms of assembly, tetramer of two alpha and two beta subunits. Mg(2+) serves as cofactor.

It is found in the cytoplasm. It carries out the reaction tRNA(Phe) + L-phenylalanine + ATP = L-phenylalanyl-tRNA(Phe) + AMP + diphosphate + H(+). This Rickettsia felis (strain ATCC VR-1525 / URRWXCal2) (Rickettsia azadi) protein is Phenylalanine--tRNA ligase beta subunit.